We begin with the raw amino-acid sequence, 468 residues long: MTNAKTLYQKVWDAHIVASPEGEAPVIYVDRHLVHEVTSPQAFSGLKVAGRKLRAPEKTFATMDHNTSTRSASLDALSPMARTQVETLAQNCKDFGVRLYDIHHPNQGIVHVMGPELGITLPGTVIVCGDSHTATHGAFGALAFGIGTSEVEHVLATQTLRQLKAKTMKIEVRGHVTDGVTAKDIVLAIIGKIGMDGGTGYVVEFCGEAIEALSMEGRMTVCNMAIEMGAKAGMVAPDQTTFDYLAGREFAPKDEDWAEAVAYWKAIKTDDGAVFDAVVELDAADIAPQLTWGTNPGQVVAIDGKVPDPLNEANPSTRASMEKALEYIGLSAGTQMTDISINKVFIGSCTNSRIEDLRSAAVHAKGRKVASGVTAIVVPGSGQVKAQAEAEGLDKIFIEAGFEWRLPGCSMCLAMNDDRLEAGDRCASTSNRNFEGRQGRGSRTHLVSPAMAAAAAVAGHFVDIRKPY.

[4Fe-4S] cluster-binding residues include Cys349, Cys409, and Cys412.

The protein belongs to the aconitase/IPM isomerase family. LeuC type 1 subfamily. As to quaternary structure, heterodimer of LeuC and LeuD. Requires [4Fe-4S] cluster as cofactor.

It carries out the reaction (2R,3S)-3-isopropylmalate = (2S)-2-isopropylmalate. The protein operates within amino-acid biosynthesis; L-leucine biosynthesis; L-leucine from 3-methyl-2-oxobutanoate: step 2/4. Functionally, catalyzes the isomerization between 2-isopropylmalate and 3-isopropylmalate, via the formation of 2-isopropylmaleate. The sequence is that of 3-isopropylmalate dehydratase large subunit from Shewanella baltica (strain OS155 / ATCC BAA-1091).